The sequence spans 417 residues: D-amino acid dehydrogenase (417 aa).

3 to 17 serves as a coordination point for FAD; that stretch reads VIVLGSGVIGVTAAW.

The protein belongs to the DadA oxidoreductase family. FAD serves as cofactor.

The catalysed reaction is a D-alpha-amino acid + A + H2O = a 2-oxocarboxylate + AH2 + NH4(+). Its pathway is amino-acid degradation; D-alanine degradation; NH(3) and pyruvate from D-alanine: step 1/1. In terms of biological role, oxidative deamination of D-amino acids. In Methylobacillus flagellatus (strain ATCC 51484 / DSM 6875 / VKM B-1610 / KT), this protein is D-amino acid dehydrogenase.